We begin with the raw amino-acid sequence, 190 residues long: Syndecan-2-B (190 aa).

The signal sequence occupies residues 1–22 (MRNVWLIVPFALLAAFSGETWA). Residues 23–136 (QADRDLYIDS…NLFHRTEVLA (114 aa)) are Extracellular-facing. A disordered region spans residues 34-60 (ESSGNYPVDDDDYSSGSGSGIPAHDDD). Residues S36, S48, S50, and S52 are each glycosylated (O-linked (Xyl...) (glycosaminoglycan) serine). A helical transmembrane segment spans residues 137–157 (AVIAGGGIGFLFAVFLILLLV). Topologically, residues 158-190 (YRMRKKDEGSYDLGERKPSSAVYQKAPTKEFYA) are cytoplasmic. Positions 167 to 190 (SYDLGERKPSSAVYQKAPTKEFYA) are disordered.

The protein belongs to the syndecan proteoglycan family. In terms of processing, O-glycosylated; contains both heparan sulfate and chondroitin sulfate.

It is found in the membrane. In terms of biological role, cell surface proteoglycan. This Xenopus laevis (African clawed frog) protein is Syndecan-2-B (sdc2-b).